Reading from the N-terminus, the 187-residue chain is Ubiquinone biosynthesis protein COQ4 homolog, mitochondrial (187 aa).

The Zn(2+) site is built by His-77, Asp-78, His-81, and Glu-93.

This sequence belongs to the COQ4 family. In terms of assembly, component of a multi-subunit COQ enzyme complex. It depends on Zn(2+) as a cofactor.

It is found in the mitochondrion inner membrane. It catalyses the reaction a 4-hydroxy-3-methoxy-5-(all-trans-polyprenyl)benzoate + H(+) = a 2-methoxy-6-(all-trans-polyprenyl)phenol + CO2. The protein operates within cofactor biosynthesis; ubiquinone biosynthesis. Its function is as follows. Lyase that catalyzes the C1-decarboxylation of 4-hydroxy-3-methoxy-5-(all-trans-polyprenyl)benzoic acid into 2-methoxy-6-(all-trans-polyprenyl)phenol during ubiquinone biosynthesis. The polypeptide is Ubiquinone biosynthesis protein COQ4 homolog, mitochondrial (Leishmania major).